Consider the following 152-residue polypeptide: SsrA-binding protein (152 aa).

Residues 122–152 form a disordered region; sequence KGKKNHDKRETEAARDWQRDKARLMKGDRGD. Residues 128 to 152 show a composition bias toward basic and acidic residues; that stretch reads DKRETEAARDWQRDKARLMKGDRGD.

This sequence belongs to the SmpB family.

It is found in the cytoplasm. Functionally, required for rescue of stalled ribosomes mediated by trans-translation. Binds to transfer-messenger RNA (tmRNA), required for stable association of tmRNA with ribosomes. tmRNA and SmpB together mimic tRNA shape, replacing the anticodon stem-loop with SmpB. tmRNA is encoded by the ssrA gene; the 2 termini fold to resemble tRNA(Ala) and it encodes a 'tag peptide', a short internal open reading frame. During trans-translation Ala-aminoacylated tmRNA acts like a tRNA, entering the A-site of stalled ribosomes, displacing the stalled mRNA. The ribosome then switches to translate the ORF on the tmRNA; the nascent peptide is terminated with the 'tag peptide' encoded by the tmRNA and targeted for degradation. The ribosome is freed to recommence translation, which seems to be the essential function of trans-translation. This Caulobacter sp. (strain K31) protein is SsrA-binding protein.